The sequence spans 589 residues: Zinc finger and BTB domain-containing protein 46 (589 aa).

In terms of domain architecture, BTB spans 31–99 (CDVCVVVEGK…MYSAHLALTS (69 aa)). Residues 173–330 (RRTSPANSSG…ASSSDSRGER (158 aa)) form a disordered region. Residues 197–207 (GKEDQEPKADG) are compositionally biased toward basic and acidic residues. Residue K229 forms a Glycyl lysine isopeptide (Lys-Gly) (interchain with G-Cter in SUMO2) linkage. The residue at position 234 (S234) is a Phosphoserine. Residues 305 to 325 (WPFSSRDSNADLSVTEASSSD) are compositionally biased toward polar residues. C2H2-type zinc fingers lie at residues 418–436 (FKCP…LKRH) and 446–468 (YPCE…TLVH). The interval 512–589 (PLDHGGGGGE…GPDKDFAWLS (78 aa)) is disordered. Over residues 546–570 (EELGEDDEGLAPEDALLADDKDEED) the composition is skewed to acidic residues.

Sumoylated. Desumoylation by DESI1 reverses transcriptional repression activity.

Its subcellular location is the nucleus. Its function is as follows. Functions as a transcriptional repressor for PRDM1. The sequence is that of Zinc finger and BTB domain-containing protein 46 (ZBTB46) from Homo sapiens (Human).